We begin with the raw amino-acid sequence, 457 residues long: Glycine receptor subunit alpha-1 (457 aa).

Positions 1 to 28 (MYSFNTLRLYLWETIVFFSLAASKEAEA) are cleaved as a signal peptide. Topologically, residues 29–250 (ARSASKPMSP…RFHLERQMGY (222 aa)) are extracellular. The N-linked (GlcNAc...) asparagine glycan is linked to Asn66. Glycine contacts are provided by Arg93 and Ser157. The cysteines at positions 166 and 180 are disulfide-linked. Zn(2+) is bound by residues Glu220 and Asp222. Cys226 and Cys237 are oxidised to a cystine. 230–235 (YNTGKF) contacts strychnine. Thr232 provides a ligand contact to glycine. His243 is a binding site for Zn(2+). The chain crosses the membrane as a helical span at residues 251–272 (YLIQMYIPSLLIVILSWISFWI). Topologically, residues 273-277 (NMDAA) are cytoplasmic. Residues 278–298 (PARVGLGITTVLTMTTQSSGS) traverse the membrane as a helical segment. Over 299–309 (RASLPKVSYVK) the chain is Extracellular. Residues 310–330 (AIDIWMAVCLLFVFSALLEYA) form a helical membrane-spanning segment. Residues 331–425 (AVNFVSRQHK…FIQRAKKIDK (95 aa)) lie on the Cytoplasmic side of the membrane. Residues 391 to 410 (KGANNSNTTNPPPAPSKSPE) form a disordered region. The chain crosses the membrane as a helical span at residues 426-446 (ISRIGFPMAFLIFNMFYWIIY). At 447–457 (KIVRREDVHNQ) the chain is on the extracellular side.

This sequence belongs to the ligand-gated ion channel (TC 1.A.9) family. Glycine receptor (TC 1.A.9.3) subfamily. GLRA1 sub-subfamily. Interacts with GLRB to form heteropentameric channels; this is probably the predominant form in vivo. Heteropentamer composed of four GLRA1 subunits and one GLRB subunit. Heteropentamer composed of two GLRA1 and three GLRB. Heteropentamer composed of three GLRA1 and two GLRB. Homopentamer (in vitro). Both homopentamers and heteropentamers form functional ion channels, but their characteristics are subtly different. As to expression, detected on spinal cord neurons (at protein level). Detected in spinal cord.

It is found in the postsynaptic cell membrane. Its subcellular location is the synapse. It localises to the perikaryon. The protein localises to the cell projection. The protein resides in the dendrite. It is found in the cell membrane. It carries out the reaction chloride(in) = chloride(out). Channel opening is triggered by extracellular glycine. Channel characteristics depend on the subunit composition; heteropentameric channels are activated by lower glycine levels and display faster desensitization. Its function is as follows. Subunit of heteromeric glycine-gated chloride channels. Plays an important role in the down-regulation of neuronal excitability. Contributes to the generation of inhibitory postsynaptic currents. Channel activity is potentiated by ethanol. Potentiation of channel activity by intoxicating levels of ethanol contribute to the sedative effects of ethanol. This chain is Glycine receptor subunit alpha-1 (GLRA1), found in Bos taurus (Bovine).